The primary structure comprises 114 residues: T-cell leukemia/lymphoma protein 1A (114 aa).

The protein belongs to the TCL1 family. As to quaternary structure, homodimer. Interacts with AKT1, AKT2 and AKT3 (via PH domain). Interacts with PNPT1; the interaction has no effect on PNPT1 exonuclease activity. As to expression, restricted in the T-cell lineage to immature thymocytes and activated peripheral lymphocytes. Preferentially expressed early in T- and B-lymphocyte differentiation.

It localises to the cytoplasm. The protein resides in the nucleus. It is found in the microsome. The protein localises to the endoplasmic reticulum. Enhances the phosphorylation and activation of AKT1, AKT2 and AKT3. Promotes nuclear translocation of AKT1. Enhances cell proliferation, stabilizes mitochondrial membrane potential and promotes cell survival. The protein is T-cell leukemia/lymphoma protein 1A (TCL1A) of Homo sapiens (Human).